Consider the following 158-residue polypeptide: MKCPYCGYPDSKVIDSRPTDDNTSIRRRRECLKCGKRFTTYEKVEQLPILVIKKDNRREVYDRDKILKGMIKACEKRPVPIKVLEEITDEIDKRIINSMEREITSTEIGEMVMEKLKNVDEVAYVRFASVYRQFKDINTFMDELKKLLKENETKKEKT.

A zinc finger lies at 3-34 (CPYCGYPDSKVIDSRPTDDNTSIRRRRECLKC). The 91-residue stretch at 49-139 (ILVIKKDNRR…VYRQFKDINT (91 aa)) folds into the ATP-cone domain.

Belongs to the NrdR family. It depends on Zn(2+) as a cofactor.

In terms of biological role, negatively regulates transcription of bacterial ribonucleotide reductase nrd genes and operons by binding to NrdR-boxes. This is Transcriptional repressor NrdR from Thermoanaerobacter pseudethanolicus (strain ATCC 33223 / 39E) (Clostridium thermohydrosulfuricum).